Consider the following 695-residue polypeptide: DNA ligase (695 aa).

NAD(+) contacts are provided by residues 44 to 48, 93 to 94, and Glu123; these read DAEYD and SL. The active-site N6-AMP-lysine intermediate is the Lys125. NAD(+)-binding residues include Arg146, Glu184, Lys300, and Lys324. The Zn(2+) site is built by Cys418, Cys421, Cys436, and Cys442. Residues 605-694 enclose the BRCT domain; sequence SAAKPLAGIT…PDAARSMAQR (90 aa).

The protein belongs to the NAD-dependent DNA ligase family. LigA subfamily. It depends on Mg(2+) as a cofactor. Mn(2+) is required as a cofactor.

It catalyses the reaction NAD(+) + (deoxyribonucleotide)n-3'-hydroxyl + 5'-phospho-(deoxyribonucleotide)m = (deoxyribonucleotide)n+m + AMP + beta-nicotinamide D-nucleotide.. Functionally, DNA ligase that catalyzes the formation of phosphodiester linkages between 5'-phosphoryl and 3'-hydroxyl groups in double-stranded DNA using NAD as a coenzyme and as the energy source for the reaction. It is essential for DNA replication and repair of damaged DNA. This is DNA ligase from Acidothermus cellulolyticus (strain ATCC 43068 / DSM 8971 / 11B).